A 132-amino-acid polypeptide reads, in one-letter code: Phosphoribosyl-AMP cyclohydrolase (132 aa).

Residue D79 coordinates Mg(2+). C80 serves as a coordination point for Zn(2+). Mg(2+) is bound by residues D81 and D83. 2 residues coordinate Zn(2+): C100 and C107.

It belongs to the PRA-CH family. Homodimer. Mg(2+) is required as a cofactor. Requires Zn(2+) as cofactor.

It is found in the cytoplasm. The enzyme catalyses 1-(5-phospho-beta-D-ribosyl)-5'-AMP + H2O = 1-(5-phospho-beta-D-ribosyl)-5-[(5-phospho-beta-D-ribosylamino)methylideneamino]imidazole-4-carboxamide. It participates in amino-acid biosynthesis; L-histidine biosynthesis; L-histidine from 5-phospho-alpha-D-ribose 1-diphosphate: step 3/9. Its function is as follows. Catalyzes the hydrolysis of the adenine ring of phosphoribosyl-AMP. This Acidovorax ebreus (strain TPSY) (Diaphorobacter sp. (strain TPSY)) protein is Phosphoribosyl-AMP cyclohydrolase.